We begin with the raw amino-acid sequence, 182 residues long: ATP-dependent protease subunit HslV (182 aa).

Residue Thr-7 is part of the active site. Gly-162, Cys-165, and Thr-168 together coordinate Na(+).

Belongs to the peptidase T1B family. HslV subfamily. As to quaternary structure, a double ring-shaped homohexamer of HslV is capped on each side by a ring-shaped HslU homohexamer. The assembly of the HslU/HslV complex is dependent on binding of ATP.

It localises to the cytoplasm. The enzyme catalyses ATP-dependent cleavage of peptide bonds with broad specificity.. Allosterically activated by HslU binding. In terms of biological role, protease subunit of a proteasome-like degradation complex believed to be a general protein degrading machinery. In Legionella pneumophila (strain Lens), this protein is ATP-dependent protease subunit HslV.